Reading from the N-terminus, the 251-residue chain is MRQIIIAGNWKMNTTLSEACTLVQGMKYELDQISGIQKIVCPPFISLAPVKTILDGSSIHLGAQNLFYEEKGAYTGEISPLMLQDICPYVIIGHSERRAYFGETGQVVNRKIKAALQAGIMPIVCVGEKLEENENGQTRQILETQMKEALAGINPSSIIIAYEPIWAIGTGKAATAAEANNTISYIRKVLGDIWGNTASRITPILYGGSVNEKNTAELLCQSDIDGALVGGASLKAESFVSICRQAADVRK.

N9–K11 contributes to the substrate binding site. H94 functions as the Electrophile in the catalytic mechanism. E163 serves as the catalytic Proton acceptor. Residues G169, S209, and G230–G231 each bind substrate.

The protein belongs to the triosephosphate isomerase family. In terms of assembly, homodimer.

The protein resides in the cytoplasm. The catalysed reaction is D-glyceraldehyde 3-phosphate = dihydroxyacetone phosphate. Its pathway is carbohydrate biosynthesis; gluconeogenesis. The protein operates within carbohydrate degradation; glycolysis; D-glyceraldehyde 3-phosphate from glycerone phosphate: step 1/1. In terms of biological role, involved in the gluconeogenesis. Catalyzes stereospecifically the conversion of dihydroxyacetone phosphate (DHAP) to D-glyceraldehyde-3-phosphate (G3P). The chain is Triosephosphate isomerase from Dehalococcoides mccartyi (strain ATCC BAA-2266 / KCTC 15142 / 195) (Dehalococcoides ethenogenes (strain 195)).